Consider the following 348-residue polypeptide: uncharacterized protein (348 aa).

WD repeat units follow at residues 59–98 (GFQG…VVYS), 142–182 (GHTD…LIQT), 185–226 (DNLG…LLGT), 229–267 (QQPG…ELFS), 270–309 (GPSL…QVTT), and 312–347 (GHQG…SALA).

This is an uncharacterized protein from Synechocystis sp. (strain ATCC 27184 / PCC 6803 / Kazusa).